A 355-amino-acid chain; its full sequence is Protein RecA (355 aa).

65–72 (GPESSGKT) serves as a coordination point for ATP.

It belongs to the RecA family.

It localises to the cytoplasm. Functionally, can catalyze the hydrolysis of ATP in the presence of single-stranded DNA, the ATP-dependent uptake of single-stranded DNA by duplex DNA, and the ATP-dependent hybridization of homologous single-stranded DNAs. It interacts with LexA causing its activation and leading to its autocatalytic cleavage. The sequence is that of Protein RecA from Pseudomonas putida (strain W619).